We begin with the raw amino-acid sequence, 489 residues long: MEAAEGSENYDGIQVLLSREVIDTAPQCPHGPTLLFVKVSQGKEQGRRFYACSACRDRKDCHFFQWEDEKVSQARLAAREEYNKSHQPPMTHAEYARSFQEFTALPLAKRKFCCDCQQLLLQTNWETHSRHRVLGDISLSQLKRPSQLLHPLENKKANAQYLFADRSCTFLLDTIIALGFRRVLCVGTPRLHELIKLRACKGTTPPIKSLLLDIDFRYSQFYSEEEFSHYNMFNHHFFGGEAAKLVCQKFLQEEDGNGALLVTDPPFGGLVEPLAFSFKRLREMWKDSNPENANNLPIFWMFPYFFESRILQCFPDFAMLDYQVDYDNHALYKHGKTGRKQSPVRIFTDLPLDKIVLPASEGYRFCSVCERFVCSENKHCDICNRCTSKDGRSWKHCSQCKKCVKPSWSHCSACNHCALPGHPCGTAGDGCFLCGGKGHKRRGCPHLSVSADGERMKRNLKQRSIKGNMKKQPTATTSKKKKRKRNNPC.

Residues cysteine 28, histidine 30, cysteine 52, cysteine 61, cysteine 113, cysteine 116, histidine 128, and histidine 131 each contribute to the Zn(2+) site. A GRF-type zinc finger spans residues 28 to 70 (CPHGPTLLFVKVSQGKEQGRRFYACSACRDRKDCHFFQWEDEK). Residues 160 to 163 (QYLF), arginine 190, aspartate 213, 231 to 232 (NM), and aspartate 264 contribute to the S-adenosyl-L-methionine site. The segment at 323–343 (QVDYDNHALYKHGKTGRKQSP) is regulatory loop. The Zn(2+) site is built by cysteine 366, cysteine 369, histidine 379, cysteine 380, cysteine 383, cysteine 386, histidine 396, cysteine 397, cysteine 400, cysteine 403, histidine 410, cysteine 411, cysteine 414, cysteine 417, histidine 422, and cysteine 424. The region spanning 381–431 (DICNRCTSKDGRSWKHCSQCKKCVKPSWSHCSACNHCALPGHPCGTAGDGC) is the DHHC domain. Residues 429–446 (DGCFLCGGKGHKRRGCPH) form a CCHC-type zinc finger. A disordered region spans residues 455–489 (RMKRNLKQRSIKGNMKKQPTATTSKKKKRKRNNPC). Basic residues predominate over residues 478–489 (SKKKKRKRNNPC).

This sequence belongs to the ZCCHC4 family.

The protein localises to the cytoplasm. Its subcellular location is the nucleus. It is found in the nucleolus. It carries out the reaction adenosine(4220) in 28S rRNA + S-adenosyl-L-methionine = N(6)-methyladenosine(4220) in 28S rRNA + S-adenosyl-L-homocysteine + H(+). Its function is as follows. rRNA N6-methyltransferase that specifically methylates the adenine in position 4220 of 28S rRNA. N6-methylation of adenine(4220) in 28S rRNA is required for translation. The chain is rRNA N(6)-adenosine-methyltransferase ZCCHC4 (zcchc4) from Xenopus laevis (African clawed frog).